Consider the following 348-residue polypeptide: Elongation factor Ts (348 aa).

Residues 82-85 (TDFV) are involved in Mg(2+) ion dislocation from EF-Tu.

Belongs to the EF-Ts family.

Its subcellular location is the cytoplasm. In terms of biological role, associates with the EF-Tu.GDP complex and induces the exchange of GDP to GTP. It remains bound to the aminoacyl-tRNA.EF-Tu.GTP complex up to the GTP hydrolysis stage on the ribosome. This is Elongation factor Ts from Aliarcobacter butzleri (strain RM4018) (Arcobacter butzleri).